The sequence spans 891 residues: Dynein axonemal intermediate chain 3 (891 aa).

A compositionally biased stretch (basic residues) spans 1–16 (MAPKQKKKSSRRKKSP). The interval 1-27 (MAPKQKKKSSRRKKSPKPILAASEDME) is disordered. WD repeat units lie at residues 395 to 435 (ESPD…DRIE), 477 to 533 (GHKR…PLTP), 670 to 709 (IHDGIVHTIQRSPFYDDIILTVGGWNVAIWKESVMTGPLL), and 713 to 753 (CAPK…HEPA). Residues 817–861 (HLEYVEQRKKIREQEKKEMEQEMAKKKVKIYQKSKEQMEAELKMD) are a coiled coil.

Interacts with ACTR2; this interaction reduces binding of the Arp2/3 complex to the VCA domain of nucleation promoting factors. Part of the multisubunit axonemal dynein complex formed at least of two heavy chains and a number of intermediate and light chains. Found in a associated with the catalytic heavy chain DNAH2, the intermediate chain DNAI4, and the light chain DYNLT1.

It localises to the cytoplasm. Its function is as follows. Acts as a negative regulator of cell migration, invasion, and metastasis downstream of p53/TP53, through inhibition of Arp2/3 complex-mediated actin polymerization. Via its association with the multisubunit axonemal dynein complex, is potentially involved in the regulation of cilia function. May play a role in osteogenesis of dental tissue-derived mesenchymal stem cells. In Macaca fascicularis (Crab-eating macaque), this protein is Dynein axonemal intermediate chain 3 (DNAI3).